The following is a 283-amino-acid chain: Glutamate racemase (283 aa).

Substrate contacts are provided by residues 28–29 and 60–61; these read DS and YG. Cys92 acts as the Proton donor/acceptor in catalysis. Substrate is bound at residue 93 to 94; it reads NT. Cys204 acts as the Proton donor/acceptor in catalysis. Substrate is bound at residue 205–206; the sequence is TH.

It belongs to the aspartate/glutamate racemases family.

It catalyses the reaction L-glutamate = D-glutamate. Its pathway is cell wall biogenesis; peptidoglycan biosynthesis. In terms of biological role, provides the (R)-glutamate required for cell wall biosynthesis. In Salmonella enteritidis PT4 (strain P125109), this protein is Glutamate racemase.